Here is a 258-residue protein sequence, read N- to C-terminus: Imidazole glycerol phosphate synthase subunit HisF (258 aa).

Residues D11 and D130 contribute to the active site.

The protein belongs to the HisA/HisF family. Heterodimer of HisH and HisF.

The protein localises to the cytoplasm. The catalysed reaction is 5-[(5-phospho-1-deoxy-D-ribulos-1-ylimino)methylamino]-1-(5-phospho-beta-D-ribosyl)imidazole-4-carboxamide + L-glutamine = D-erythro-1-(imidazol-4-yl)glycerol 3-phosphate + 5-amino-1-(5-phospho-beta-D-ribosyl)imidazole-4-carboxamide + L-glutamate + H(+). It participates in amino-acid biosynthesis; L-histidine biosynthesis; L-histidine from 5-phospho-alpha-D-ribose 1-diphosphate: step 5/9. Its function is as follows. IGPS catalyzes the conversion of PRFAR and glutamine to IGP, AICAR and glutamate. The HisF subunit catalyzes the cyclization activity that produces IGP and AICAR from PRFAR using the ammonia provided by the HisH subunit. The sequence is that of Imidazole glycerol phosphate synthase subunit HisF from Methylobacterium sp. (strain 4-46).